The sequence spans 248 residues: Phosphomannomutase (248 aa).

The Nucleophile role is filled by aspartate 12. Aspartate 12 and aspartate 14 together coordinate Mg(2+). Aspartate 14 acts as the Proton donor/acceptor in catalysis. Alpha-D-mannose 1-phosphate contacts are provided by arginine 21, arginine 123, arginine 134, arginine 141, serine 179, and aspartate 181. Aspartate 207, phenylalanine 219, and threonine 224 together coordinate Mg(2+).

It belongs to the eukaryotic PMM family. Homodimer. Mg(2+) serves as cofactor.

The protein resides in the cytoplasm. The enzyme catalyses alpha-D-mannose 1-phosphate = D-mannose 6-phosphate. It participates in nucleotide-sugar biosynthesis; GDP-alpha-D-mannose biosynthesis; alpha-D-mannose 1-phosphate from D-fructose 6-phosphate: step 2/2. Functionally, catalyzes the interconversion of mannose-6-phosphate to mannose-1-phosphate, the precursor for the synthesis of GDP-mannose. GDP-mannose is an essential sugar nucleotide for the synthesis of D-mannose-containing cell wall polysaccharides (galactomannans and glucomannans), glycolipids, glycoproteins and the antioxidant L-ascorbate. The chain is Phosphomannomutase from Spinacia oleracea (Spinach).